An 837-amino-acid polypeptide reads, in one-letter code: Ubiquitin carboxyl-terminal hydrolase A (837 aa).

The UBP-type; degenerate zinc finger occupies 166–277 (PSAFAESIIQ…QHLTHWGLNP (112 aa)). One can recognise a USP domain in the interval 319 to 835 (TGIENLGNSC…LGYIYFYKRQ (517 aa)). Catalysis depends on Cys328, which acts as the Nucleophile. Residues 628–669 (SFNQEVLDTLLSMDFPLVRCKKALLATGGKDAELAMNWIFEH) form the UBA 1 domain. The interval 676 to 695 (DIEQTPVNNNNNNNNSSNSN) is disordered. Residues 683–695 (NNNNNNNNSSNSN) are compositionally biased toward low complexity. A UBA 2 domain is found at 700 to 740 (VFNSQDVDNIIGMGFTDSQAKLALKNTKGNLERAADWLFSH). His797 acts as the Proton acceptor in catalysis.

The protein belongs to the peptidase C19 family.

The catalysed reaction is Thiol-dependent hydrolysis of ester, thioester, amide, peptide and isopeptide bonds formed by the C-terminal Gly of ubiquitin (a 76-residue protein attached to proteins as an intracellular targeting signal).. Required for development but not growth. The sequence is that of Ubiquitin carboxyl-terminal hydrolase A (ubpA) from Dictyostelium discoideum (Social amoeba).